The following is a 472-amino-acid chain: Adenosylhomocysteinase (472 aa).

The substrate site is built by Thr62, Asp137, and Glu197. 198 to 200 serves as a coordination point for NAD(+); it reads TTT. Substrate contacts are provided by Lys227 and Asp231. NAD(+) is bound by residues Asn232, 261 to 266, Glu284, Asn319, 340 to 342, and Asn385; these read GYGDVG and IGH.

This sequence belongs to the adenosylhomocysteinase family. It depends on NAD(+) as a cofactor.

The protein localises to the cytoplasm. The catalysed reaction is S-adenosyl-L-homocysteine + H2O = L-homocysteine + adenosine. It functions in the pathway amino-acid biosynthesis; L-homocysteine biosynthesis; L-homocysteine from S-adenosyl-L-homocysteine: step 1/1. Its function is as follows. May play a key role in the regulation of the intracellular concentration of adenosylhomocysteine. This is Adenosylhomocysteinase from Bordetella petrii (strain ATCC BAA-461 / DSM 12804 / CCUG 43448).